The primary structure comprises 83 residues: Small ribosomal subunit protein bS16 (83 aa).

Belongs to the bacterial ribosomal protein bS16 family.

The sequence is that of Small ribosomal subunit protein bS16 from Pseudoalteromonas atlantica (strain T6c / ATCC BAA-1087).